The sequence spans 618 residues: tRNA 5-methylaminomethyl-2-thiouridine biosynthesis bifunctional protein MnmC (618 aa).

Residues 1-231 form a tRNA (mnm(5)s(2)U34)-methyltransferase region; sequence MLQTYAPIDF…KRHMLSAVYE (231 aa). The FAD-dependent cmnm(5)s(2)U34 oxidoreductase stretch occupies residues 256-618; the sequence is IGAGIAGATT…KDIIRGHLNN (363 aa).

In the N-terminal section; belongs to the methyltransferase superfamily. tRNA (mnm(5)s(2)U34)-methyltransferase family. This sequence in the C-terminal section; belongs to the DAO family. Requires FAD as cofactor.

The protein resides in the cytoplasm. The enzyme catalyses 5-aminomethyl-2-thiouridine(34) in tRNA + S-adenosyl-L-methionine = 5-methylaminomethyl-2-thiouridine(34) in tRNA + S-adenosyl-L-homocysteine + H(+). Catalyzes the last two steps in the biosynthesis of 5-methylaminomethyl-2-thiouridine (mnm(5)s(2)U) at the wobble position (U34) in tRNA. Catalyzes the FAD-dependent demodification of cmnm(5)s(2)U34 to nm(5)s(2)U34, followed by the transfer of a methyl group from S-adenosyl-L-methionine to nm(5)s(2)U34, to form mnm(5)s(2)U34. The sequence is that of tRNA 5-methylaminomethyl-2-thiouridine biosynthesis bifunctional protein MnmC from Dichelobacter nodosus (strain VCS1703A).